Here is a 790-residue protein sequence, read N- to C-terminus: Kinesin-like protein KIN-14D (790 aa).

Disordered regions lie at residues 1–56 (MPLR…DVGS) and 116–139 (DKENLSSSLQSAEKRYSDKELDAK). Residues 1–66 (MPLRNQNRAP…TEECGKVEFT (66 aa)) form a globular region. Residues 16 to 33 (VKKEALSSIPFDKRRKET) are compositionally biased toward basic and acidic residues. Polar residues predominate over residues 34-55 (QGTGRRQVLSTVNRQDANSDVG). Coiled coils occupy residues 117–316 (KENL…HVVQ) and 347–426 (SLEE…LELK). Over residues 127-139 (AEKRYSDKELDAK) the composition is skewed to basic and acidic residues. A Kinesin motor domain is found at 428–769 (NIRVFCRVRP…LRFAARVNAC (342 aa)). 513–520 (GQTGSGKT) provides a ligand contact to ATP.

This sequence belongs to the TRAFAC class myosin-kinesin ATPase superfamily. Kinesin family. KIN-14 subfamily. Slightly expressed in anther lobes with pollen mother cells at anther stage 5. Strongly expressed at anther stage 6 in the tapetum and meiotic cells. Also detected in the gynoecium and the ovule.

Its subcellular location is the cytoplasm. It localises to the cytoskeleton. It is found in the phragmoplast. Kinesin that supports microtubule movement in an ATP-dependent manner and that functions as a minus-end directed motor as well as a plus-end tracking protein. During mitosis, is involved in early spindle assembly. Participates in the capture of antiparallel interpolar microtubules and helps in generating force to coalign microtubules. The chain is Kinesin-like protein KIN-14D from Arabidopsis thaliana (Mouse-ear cress).